We begin with the raw amino-acid sequence, 262 residues long: Dihydroorotate dehydrogenase B (NAD(+)), electron transfer subunit (262 aa).

The FAD-binding FR-type domain maps to 3-104; the sequence is KLQEMMTIVS…MGPLGNGFPV (102 aa). FAD contacts are provided by residues 53 to 56, 70 to 72, and 79 to 80; these read RPIS, LYR, and GT. 4 residues coordinate [2Fe-2S] cluster: C226, C231, C234, and C249.

The protein belongs to the PyrK family. Heterotetramer of 2 PyrK and 2 PyrD type B subunits. Requires [2Fe-2S] cluster as cofactor. FAD serves as cofactor.

The protein operates within pyrimidine metabolism; UMP biosynthesis via de novo pathway; orotate from (S)-dihydroorotate (NAD(+) route): step 1/1. Responsible for channeling the electrons from the oxidation of dihydroorotate from the FMN redox center in the PyrD type B subunit to the ultimate electron acceptor NAD(+). This is Dihydroorotate dehydrogenase B (NAD(+)), electron transfer subunit from Lactococcus lactis subsp. lactis (strain IL1403) (Streptococcus lactis).